We begin with the raw amino-acid sequence, 21 residues long: Outer membrane protein A (21 aa).

Residues Thr6–Ser16 form a beta stranded membrane-spanning segment.

Belongs to the outer membrane OOP (TC 1.B.6) superfamily. OmpA family. As to quaternary structure, monomer and homodimer.

The protein localises to the cell outer membrane. Functionally, with TolR probably plays a role in maintaining the position of the peptidoglycan cell wall in the periplasm. Acts as a porin with low permeability that allows slow penetration of small solutes; an internal gate slows down solute passage. In Actinobacillus lignieresii, this protein is Outer membrane protein A.